Here is a 149-residue protein sequence, read N- to C-terminus: Large ribosomal subunit protein bL9 (149 aa).

This sequence belongs to the bacterial ribosomal protein bL9 family.

Functionally, binds to the 23S rRNA. The protein is Large ribosomal subunit protein bL9 of Aliivibrio salmonicida (strain LFI1238) (Vibrio salmonicida (strain LFI1238)).